The sequence spans 594 residues: Aspartate--tRNA(Asp/Asn) ligase (594 aa).

Glu175 serves as a coordination point for L-aspartate. Positions 199 to 202 (QQLK) are aspartate. An L-aspartate-binding site is contributed by Arg221. ATP contacts are provided by residues 221–223 (RDE) and Gln230. His450 serves as a coordination point for L-aspartate. An ATP-binding site is contributed by Glu485. Residue Arg492 coordinates L-aspartate. An ATP-binding site is contributed by 537-540 (GIDR).

Belongs to the class-II aminoacyl-tRNA synthetase family. Type 1 subfamily. In terms of assembly, homodimer.

The protein resides in the cytoplasm. It catalyses the reaction tRNA(Asx) + L-aspartate + ATP = L-aspartyl-tRNA(Asx) + AMP + diphosphate. Its function is as follows. Aspartyl-tRNA synthetase with relaxed tRNA specificity since it is able to aspartylate not only its cognate tRNA(Asp) but also tRNA(Asn). Reaction proceeds in two steps: L-aspartate is first activated by ATP to form Asp-AMP and then transferred to the acceptor end of tRNA(Asp/Asn). The polypeptide is Aspartate--tRNA(Asp/Asn) ligase (Herpetosiphon aurantiacus (strain ATCC 23779 / DSM 785 / 114-95)).